The primary structure comprises 155 residues: Ribosomal RNA large subunit methyltransferase H (155 aa).

S-adenosyl-L-methionine is bound by residues L72, G103, and 122 to 127 (LSALTL).

The protein belongs to the RNA methyltransferase RlmH family. As to quaternary structure, homodimer.

Its subcellular location is the cytoplasm. It carries out the reaction pseudouridine(1915) in 23S rRNA + S-adenosyl-L-methionine = N(3)-methylpseudouridine(1915) in 23S rRNA + S-adenosyl-L-homocysteine + H(+). Specifically methylates the pseudouridine at position 1915 (m3Psi1915) in 23S rRNA. The chain is Ribosomal RNA large subunit methyltransferase H from Escherichia fergusonii (strain ATCC 35469 / DSM 13698 / CCUG 18766 / IAM 14443 / JCM 21226 / LMG 7866 / NBRC 102419 / NCTC 12128 / CDC 0568-73).